The following is a 514-amino-acid chain: Nuclear hormone receptor family member nhr-85 (514 aa).

Positions 28–48 (TSFSSPPATSSSSLLSPSPSS) are disordered. Residues 110–186 (TILCQVCSDK…VGMSRDAVRF (77 aa)) constitute a DNA-binding region (nuclear receptor). 2 NR C4-type zinc fingers span residues 113–133 (CQVC…CEGC) and 150–174 (CTRA…LKKC). Residues 216-514 (QYENLTEVMH…VSPVPTTLSE (299 aa)) form the NR LBD domain. A disordered region spans residues 465 to 514 (ERPRRISSSGAQEPLNLSLPHVRHQVKRDVDSDEQLEEMKVSPVPTTLSE).

Belongs to the nuclear hormone receptor family.

Its subcellular location is the nucleus. Orphan nuclear receptor. The sequence is that of Nuclear hormone receptor family member nhr-85 (nhr-85) from Caenorhabditis elegans.